The sequence spans 129 residues: MAKPGTRTRKKVKKTVVDGVAHIHASFNNTIVTITDRQGNALSWATSGGSGFRGSRKSTPFAAQVAAERAGNAAAEYGLKNLDVLVKGPGPGRESAIRALNACGYKITNITDVTPIPHNGCRPPKKRRV.

Belongs to the universal ribosomal protein uS11 family. Part of the 30S ribosomal subunit. Interacts with proteins S7 and S18. Binds to IF-3.

Located on the platform of the 30S subunit, it bridges several disparate RNA helices of the 16S rRNA. Forms part of the Shine-Dalgarno cleft in the 70S ribosome. This chain is Small ribosomal subunit protein uS11, found in Hahella chejuensis (strain KCTC 2396).